A 216-amino-acid polypeptide reads, in one-letter code: Orotate phosphoribosyltransferase (216 aa).

Residue K30 participates in 5-phospho-alpha-D-ribose 1-diphosphate binding. Position 38–39 (38–39 (FF)) interacts with orotate. 5-phospho-alpha-D-ribose 1-diphosphate-binding positions include 75 to 76 (YK), R102, K103, K106, H108, and 128 to 136 (DDVITAGTA). 2 residues coordinate orotate: T132 and R160.

This sequence belongs to the purine/pyrimidine phosphoribosyltransferase family. PyrE subfamily. Homodimer. The cofactor is Mg(2+).

It carries out the reaction orotidine 5'-phosphate + diphosphate = orotate + 5-phospho-alpha-D-ribose 1-diphosphate. It functions in the pathway pyrimidine metabolism; UMP biosynthesis via de novo pathway; UMP from orotate: step 1/2. Catalyzes the transfer of a ribosyl phosphate group from 5-phosphoribose 1-diphosphate to orotate, leading to the formation of orotidine monophosphate (OMP). The protein is Orotate phosphoribosyltransferase of Acinetobacter baylyi (strain ATCC 33305 / BD413 / ADP1).